The primary structure comprises 301 residues: Beta carbonic anhydrase 5, chloroplastic (301 aa).

Residues 1–56 constitute a chloroplast transit peptide; sequence MAATPTHFSVSHDPFSSTSLLNLQTQAIFGPNHSLKTTQLRIPASFRRKATNLQVM. At threonine 65 the chain carries Phosphothreonine. Serine 128 is modified (phosphoserine). S-nitrosocysteine is present on cysteine 231.

This sequence belongs to the beta-class carbonic anhydrase family. In terms of tissue distribution, strongly expressed in aerial tissues including leaves, stems, flowers and siliques.

Its subcellular location is the plastid. It localises to the chloroplast. The enzyme catalyses hydrogencarbonate + H(+) = CO2 + H2O. Its function is as follows. Reversible hydration of carbon dioxide. This Arabidopsis thaliana (Mouse-ear cress) protein is Beta carbonic anhydrase 5, chloroplastic (BCA5).